We begin with the raw amino-acid sequence, 203 residues long: Outer-membrane lipoprotein LolB (203 aa).

The signal sequence occupies residues 1–16; that stretch reads MKTFLPCLFFLLILVG. Cys-17 is lipidated: N-palmitoyl cysteine. Cys-17 carries the S-diacylglycerol cysteine lipid modification.

It belongs to the LolB family. As to quaternary structure, monomer.

It is found in the cell outer membrane. Functionally, plays a critical role in the incorporation of lipoproteins in the outer membrane after they are released by the LolA protein. In Psychromonas ingrahamii (strain DSM 17664 / CCUG 51855 / 37), this protein is Outer-membrane lipoprotein LolB.